Consider the following 196-residue polypeptide: Imidazoleglycerol-phosphate dehydratase (196 aa).

It belongs to the imidazoleglycerol-phosphate dehydratase family.

It is found in the cytoplasm. The enzyme catalyses D-erythro-1-(imidazol-4-yl)glycerol 3-phosphate = 3-(imidazol-4-yl)-2-oxopropyl phosphate + H2O. The protein operates within amino-acid biosynthesis; L-histidine biosynthesis; L-histidine from 5-phospho-alpha-D-ribose 1-diphosphate: step 6/9. This Desulforamulus reducens (strain ATCC BAA-1160 / DSM 100696 / MI-1) (Desulfotomaculum reducens) protein is Imidazoleglycerol-phosphate dehydratase.